Here is a 396-residue protein sequence, read N- to C-terminus: Elongation factor Tu (396 aa).

Positions Lys-10–Glu-206 constitute a tr-type G domain. The G1 stretch occupies residues Gly-19–Thr-26. Gly-19–Thr-26 provides a ligand contact to GTP. Position 26 (Thr-26) interacts with Mg(2+). The interval Gly-60 to Ser-64 is G2. A G3 region spans residues Asp-81–Gly-84. GTP-binding positions include Asp-81–His-85 and Asn-136–Asp-139. Positions Asn-136 to Asp-139 are G4. The interval Ser-174–Leu-176 is G5.

It belongs to the TRAFAC class translation factor GTPase superfamily. Classic translation factor GTPase family. EF-Tu/EF-1A subfamily. As to quaternary structure, monomer.

It is found in the cytoplasm. The catalysed reaction is GTP + H2O = GDP + phosphate + H(+). Its function is as follows. GTP hydrolase that promotes the GTP-dependent binding of aminoacyl-tRNA to the A-site of ribosomes during protein biosynthesis. This chain is Elongation factor Tu, found in Rhodopseudomonas palustris (strain BisA53).